A 202-amino-acid chain; its full sequence is Odorant-binding protein 59a (202 aa).

Residues Met1 to Ala20 form the signal peptide. Positions His43 to Arg53 are enriched in basic and acidic residues. The tract at residues His43 to Asn105 is disordered. The segment covering Gly54–Tyr65 has biased composition (gly residues).

This sequence belongs to the PBP/GOBP family. As to expression, expressed in non-neuronal cells in hygrosensitive sensilla in the second chamber of the sacculus of the antenna third segment (at protein level).

Its subcellular location is the secreted. Its function is as follows. Odorant-binding protein required for hygrotaxis behavior in humidity-detecting sensilla. The sequence is that of Odorant-binding protein 59a from Drosophila melanogaster (Fruit fly).